Here is a 403-residue protein sequence, read N- to C-terminus: Ribonuclease T2-like (403 aa).

Positions 1–19 (MLALILTISICIFLKGSTC) are cleaved as a signal peptide. 4 cysteine pairs are disulfide-bonded: Cys36/Cys55, Cys44/Cys91, Cys54/Cys158, and Cys99/Cys150. Asn78 is a glycosylation site (N-linked (GlcNAc...) asparagine). Catalysis depends on residues His84, Glu143, and His147. Asn175 is a glycosylation site (N-linked (GlcNAc...) asparagine). A disulfide bridge connects residues Cys224 and Cys259. The disordered stretch occupies residues 268 to 288 (PKNGFNPGPQPPKSPRKGYLE).

Belongs to the RNase T2 family.

Its subcellular location is the vacuole lumen. The protein localises to the cytoplasm. The catalysed reaction is a ribonucleotidyl-ribonucleotide-RNA + H2O = a 3'-end 3'-phospho-ribonucleotide-RNA + a 5'-end dephospho-ribonucleoside-RNA + H(+). Rnase which modulates cell survival under stress conditions. Released from the vacuole to the cytoplasm during stress to promote tRNA and rRNA cleavage and to activate separately a downstream pathway that promotes cell death. Involved in cell size, vacuolar morphology and growth at high temperatures and high salt concentration. In Debaryomyces hansenii (strain ATCC 36239 / CBS 767 / BCRC 21394 / JCM 1990 / NBRC 0083 / IGC 2968) (Yeast), this protein is Ribonuclease T2-like (RNY1).